The chain runs to 153 residues: Large ribosomal subunit protein uL13 (153 aa).

This sequence belongs to the universal ribosomal protein uL13 family. In terms of assembly, part of the 50S ribosomal subunit.

Functionally, this protein is one of the early assembly proteins of the 50S ribosomal subunit, although it is not seen to bind rRNA by itself. It is important during the early stages of 50S assembly. The chain is Large ribosomal subunit protein uL13 from Methylobacterium nodulans (strain LMG 21967 / CNCM I-2342 / ORS 2060).